Consider the following 547-residue polypeptide: Chorismate synthase (547 aa).

Active-site residues include His17, His104, and Asp500.

This sequence belongs to the chorismate synthase family.

The protein resides in the cytoplasm. It is found in the cytosol. The catalysed reaction is 5-O-(1-carboxyvinyl)-3-phosphoshikimate = chorismate + phosphate. The enzyme catalyses FMNH2 + NADP(+) = FMN + NADPH + 2 H(+). The protein operates within metabolic intermediate biosynthesis; chorismate biosynthesis; chorismate from D-erythrose 4-phosphate and phosphoenolpyruvate: step 7/7. Bifunctional chorismate synthase and flavin reductase. Catalyzes the conversion of 5-enolpyruvylshikimate 3-phosphate (EPSP) to form chorismate. Acts also as a flavin reductase (FR) able to generate reduced flavin mononucleotide in the presence of NADPH. This Plasmodium vivax (strain Salvador I) protein is Chorismate synthase.